Reading from the N-terminus, the 745-residue chain is Elongation factor G, mitochondrial (745 aa).

The tr-type G domain occupies 40 to 317 (EKIRNIGISA…AVLDYLPNPG (278 aa)). GTP contacts are provided by residues 49–56 (AHIDSGKT), 116–120 (DTPGH), and 170–173 (NKLD).

This sequence belongs to the TRAFAC class translation factor GTPase superfamily. Classic translation factor GTPase family. EF-G/EF-2 subfamily.

It is found in the mitochondrion. The protein operates within protein biosynthesis; polypeptide chain elongation. Functionally, mitochondrial GTPase that catalyzes the GTP-dependent ribosomal translocation step during translation elongation. During this step, the ribosome changes from the pre-translocational (PRE) to the post-translocational (POST) state as the newly formed A-site-bound peptidyl-tRNA and P-site-bound deacylated tRNA move to the P and E sites, respectively. Catalyzes the coordinated movement of the two tRNA molecules, the mRNA and conformational changes in the ribosome. Essential during development as it acts as a retrograde signal from mitochondria to the nucleus to slow down cell proliferation if mitochondrial energy output is low. This is Elongation factor G, mitochondrial from Drosophila willistoni (Fruit fly).